Here is a 161-residue protein sequence, read N- to C-terminus: Protein-export protein SecB (161 aa).

This sequence belongs to the SecB family. As to quaternary structure, homotetramer, a dimer of dimers. One homotetramer interacts with 1 SecA dimer.

The protein resides in the cytoplasm. Its function is as follows. One of the proteins required for the normal export of preproteins out of the cell cytoplasm. It is a molecular chaperone that binds to a subset of precursor proteins, maintaining them in a translocation-competent state. It also specifically binds to its receptor SecA. This is Protein-export protein SecB from Shewanella baltica (strain OS155 / ATCC BAA-1091).